Here is a 306-residue protein sequence, read N- to C-terminus: Golgi to ER traffic protein 2 (306 aa).

A compositionally biased stretch (basic and acidic residues) spans 1-18; it reads MSEISDAEKRRILREKRQ. Residues 1 to 100 form a disordered region; it reads MSEISDAEKR…PPGSAEQQNG (100 aa). Topologically, residues 1-172 are cytoplasmic; sequence MSEISDAEKR…VEAHNIAVNK (172 aa). Residues 34–57 show a composition bias toward polar residues; that stretch reads TGQTENSFLSTESPLDSRESTYPA. Residues 68–77 show a composition bias toward basic and acidic residues; the sequence is DSTKQMDELL. The segment covering 78–90 has biased composition (low complexity); the sequence is AKATSKTTSKASS. A compositionally biased stretch (polar residues) spans 91 to 100; the sequence is PPGSAEQQNG. The chain crosses the membrane as a helical span at residues 173-193; sequence LKSYTILVKWLFFLLPYLYYI. The Lumenal portion of the chain corresponds to 194 to 214; that stretch reads THSARDPFQHNAVNYVLDRSN. A helical transmembrane segment spans residues 215–234; the sequence is FFTVFTTFEIVALSVYYQLL. Residues 235-281 lie on the Cytoplasmic side of the membrane; the sequence is MSAEKSHNVNTLDNNSKILKLVSMVPPGLVPIPNLRGKVAQALQYWD. A helical transmembrane segment spans residues 282 to 302; sequence VVSMYLTDLCFAIVLAGLFQY. The Lumenal segment spans residues 303 to 306; it reads YHSM.

Belongs to the GET2 family. Component of the Golgi to ER traffic (GET) complex, which is composed of GET1, GET2 and GET3. Within the complex, GET1 and GET2 form a heterotetramer which is stabilized by phosphatidylinositol binding and which binds to the GET3 homodimer.

The protein resides in the endoplasmic reticulum membrane. It is found in the golgi apparatus membrane. Its function is as follows. Required for the post-translational delivery of tail-anchored (TA) proteins to the endoplasmic reticulum. Together with GET1, acts as a membrane receptor for soluble GET3, which recognizes and selectively binds the transmembrane domain of TA proteins in the cytosol. The GET complex cooperates with the HDEL receptor ERD2 to mediate the ATP-dependent retrieval of resident ER proteins that contain a C-terminal H-D-E-L retention signal from the Golgi to the ER. This Lachancea thermotolerans (strain ATCC 56472 / CBS 6340 / NRRL Y-8284) (Yeast) protein is Golgi to ER traffic protein 2.